A 351-amino-acid polypeptide reads, in one-letter code: Biotin synthase (351 aa).

In terms of domain architecture, Radical SAM core spans 44-262 (NRVQVSTLLS…LAVARILMPQ (219 aa)). Positions 59, 63, and 66 each coordinate [4Fe-4S] cluster. Cysteine 103, cysteine 134, cysteine 194, and arginine 266 together coordinate [2Fe-2S] cluster.

The protein belongs to the radical SAM superfamily. Biotin synthase family. Homodimer. It depends on [4Fe-4S] cluster as a cofactor. [2Fe-2S] cluster serves as cofactor.

The enzyme catalyses (4R,5S)-dethiobiotin + (sulfur carrier)-SH + 2 reduced [2Fe-2S]-[ferredoxin] + 2 S-adenosyl-L-methionine = (sulfur carrier)-H + biotin + 2 5'-deoxyadenosine + 2 L-methionine + 2 oxidized [2Fe-2S]-[ferredoxin]. Its pathway is cofactor biosynthesis; biotin biosynthesis; biotin from 7,8-diaminononanoate: step 2/2. Its function is as follows. Catalyzes the conversion of dethiobiotin (DTB) to biotin by the insertion of a sulfur atom into dethiobiotin via a radical-based mechanism. In Pseudomonas fluorescens (strain Pf0-1), this protein is Biotin synthase.